A 396-amino-acid chain; its full sequence is Elongation factor Tu (396 aa).

Residues 10 to 206 enclose the tr-type G domain; sequence KPHCNIGTIG…QVDAYIPQPE (197 aa). Positions 19–26 are G1; sequence GHVDHGKT. 19–26 is a binding site for GTP; it reads GHVDHGKT. Residue threonine 26 participates in Mg(2+) binding. The segment at 60 to 64 is G2; that stretch reads GITIS. The interval 81 to 84 is G3; the sequence is DCPG. Residues 81–85 and 136–139 contribute to the GTP site; these read DCPGH and NKCD. The interval 136 to 139 is G4; it reads NKCD. A G5 region spans residues 174 to 176; it reads SAL.

The protein belongs to the TRAFAC class translation factor GTPase superfamily. Classic translation factor GTPase family. EF-Tu/EF-1A subfamily. In terms of assembly, monomer.

Its subcellular location is the cytoplasm. It catalyses the reaction GTP + H2O = GDP + phosphate + H(+). GTP hydrolase that promotes the GTP-dependent binding of aminoacyl-tRNA to the A-site of ribosomes during protein biosynthesis. This Rhodopseudomonas palustris (strain ATCC BAA-98 / CGA009) protein is Elongation factor Tu.